Reading from the N-terminus, the 539-residue chain is Berberine bridge enzyme-like 21 (539 aa).

An N-terminal signal peptide occupies residues 1–26; it reads MIATQTFVSVFFFVFFLVSLPFFSSA. A disulfide bridge links Cys-41 with Cys-104. Asn-79 carries an N-linked (GlcNAc...) asparagine glycan. Residues 82-256 enclose the FAD-binding PCMH-type domain; it reads STPKPAIIVT…LGYKVKLVPV (175 aa). Positions 119–181 form a cross-link, 6-(S-cysteinyl)-8alpha-(pros-histidyl)-FAD (His-Cys); sequence HDYEGLSYIS…KVHGFPAGVC (63 aa). A glycan (N-linked (GlcNAc...) asparagine) is linked at Asn-340.

This sequence belongs to the oxygen-dependent FAD-linked oxidoreductase family. FAD serves as cofactor. The FAD cofactor is bound via a bicovalent 6-S-cysteinyl, 8alpha-N1-histidyl FAD linkage.

It localises to the secreted. It is found in the cell wall. The sequence is that of Berberine bridge enzyme-like 21 from Arabidopsis thaliana (Mouse-ear cress).